The sequence spans 101 residues: NAD(P)H-quinone oxidoreductase subunit 4L, chloroplastic (101 aa).

3 helical membrane passes run 2–22 (MLEH…YGLI), 32–52 (MCLE…SDLF), and 61–81 (IFSI…LAII).

This sequence belongs to the complex I subunit 4L family. As to quaternary structure, NDH is composed of at least 16 different subunits, 5 of which are encoded in the nucleus.

It localises to the plastid. The protein resides in the chloroplast thylakoid membrane. It carries out the reaction a plastoquinone + NADH + (n+1) H(+)(in) = a plastoquinol + NAD(+) + n H(+)(out). The catalysed reaction is a plastoquinone + NADPH + (n+1) H(+)(in) = a plastoquinol + NADP(+) + n H(+)(out). In terms of biological role, NDH shuttles electrons from NAD(P)H:plastoquinone, via FMN and iron-sulfur (Fe-S) centers, to quinones in the photosynthetic chain and possibly in a chloroplast respiratory chain. The immediate electron acceptor for the enzyme in this species is believed to be plastoquinone. Couples the redox reaction to proton translocation, and thus conserves the redox energy in a proton gradient. The protein is NAD(P)H-quinone oxidoreductase subunit 4L, chloroplastic of Ranunculus macranthus (Large buttercup).